A 148-amino-acid polypeptide reads, in one-letter code: UPF0178 protein SUN_1096 (148 aa).

Belongs to the UPF0178 family.

The protein is UPF0178 protein SUN_1096 of Sulfurovum sp. (strain NBC37-1).